Here is a 118-residue protein sequence, read N- to C-terminus: Large ribosomal subunit protein uL18 (118 aa).

Belongs to the universal ribosomal protein uL18 family. As to quaternary structure, part of the 50S ribosomal subunit; part of the 5S rRNA/L5/L18/L25 subcomplex. Contacts the 5S and 23S rRNAs.

This is one of the proteins that bind and probably mediate the attachment of the 5S RNA into the large ribosomal subunit, where it forms part of the central protuberance. In Sulfurovum sp. (strain NBC37-1), this protein is Large ribosomal subunit protein uL18.